Consider the following 312-residue polypeptide: Elongation factor Ts (312 aa).

The interval 84–87 (TDFV) is involved in Mg(2+) ion dislocation from EF-Tu.

The protein belongs to the EF-Ts family.

Its subcellular location is the cytoplasm. Its function is as follows. Associates with the EF-Tu.GDP complex and induces the exchange of GDP to GTP. It remains bound to the aminoacyl-tRNA.EF-Tu.GTP complex up to the GTP hydrolysis stage on the ribosome. This chain is Elongation factor Ts, found in Caulobacter vibrioides (strain ATCC 19089 / CIP 103742 / CB 15) (Caulobacter crescentus).